A 646-amino-acid chain; its full sequence is MRAPGAGSASVASLVLLWLLGLPWTWSTAAALGVYVGGGGWRFLRIVCKTARRDLFGLSVLIRVRLELRRHQRARHTIPQIFQAVVQRQPERLALVDAGSGACWTFAQLDAYSNAVANLFRRLGFAPGDVVAIFMEGRPEFVGLWLGLAKAGVEAALLNVNLRREPLAFCLGTSGAKALVFGGELAAAVAEMSGELGKSLVKFCSGDVGPDGVFPDTQLLDPLLKETSTAPLAQPPGKGMDDRLFYIYTSGTTGLPKAAIIVHSRYYRIAAFGHYSYSMQAADVLYDCLPLYHSAGNIMGVGQCLIYGLTVVLRKKFSASRFWDDCVKYNCTVVQYIGEICRYLLKQPVREAEGRHRVRLAVGNGLRPSIWEEFTERFGVRQIGEFYGATECNCSIANMDGKVGSRGFNSRILPHVYPIRLVKVNEDTMELLRDAQGLCIPCQTGEPGLLVGQINQQDPLRRFDGYISESATSKKIAHSVFRKGDSAYLSGDVLVMDELGYMYFRDRSGDTFRWRGENVSTTEVEGVLSRLLGQTDVAVYGVAVPGVEGKACMAAIADPHGRLSPNALYEELQKVLAPYARPIFLRLLPQVDTTGTFKIQKTRLQHEGFDPRQTSDRLFFLDLKQGHYLPLDQGVYTRICSGAFAL.

Residues 1-13 (MRAPGAGSASVAS) lie on the Extracellular side of the membrane. The chain crosses the membrane as a helical span at residues 14-34 (LVLLWLLGLPWTWSTAAALGV). Residues 35 to 646 (YVGGGGWRFL…TRICSGAFAL (612 aa)) are Cytoplasmic-facing. Residues 191–475 (EMSGELGKSL…YISESATSKK (285 aa)) form a sufficient for oligomerization region. Position 246–257 (246–257 (YIYTSGTTGLPK)) interacts with AMP.

The protein belongs to the ATP-dependent AMP-binding enzyme family. In terms of assembly, self-associates. May function as a homodimer. Interacts with EPRS1; mediates the translocation of SLC27A1 from the cytoplasm to the plasma membrane thereby increasing the uptake of long-chain fatty acids. Interacts with DGAT2 and this interaction is enhanced in the presence of ZFYVE1.

The protein localises to the cell membrane. Its subcellular location is the endomembrane system. The protein resides in the cytoplasm. The enzyme catalyses a fatty acid(in) = a fatty acid(out). It catalyses the reaction (9Z)-octadecenoate(out) = (9Z)-octadecenoate(in). The catalysed reaction is hexadecanoate(out) = hexadecanoate(in). It carries out the reaction (5Z,8Z,11Z,14Z)-eicosatetraenoate(out) = (5Z,8Z,11Z,14Z)-eicosatetraenoate(in). The enzyme catalyses (9Z,12Z)-octadecadienoate(out) = (9Z,12Z)-octadecadienoate(in). It catalyses the reaction a long-chain fatty acid + ATP + CoA = a long-chain fatty acyl-CoA + AMP + diphosphate. The catalysed reaction is (5Z,8Z,11Z,14Z)-eicosatetraenoate + ATP + CoA = (5Z,8Z,11Z,14Z)-eicosatetraenoyl-CoA + AMP + diphosphate. It carries out the reaction a very long-chain fatty acid + ATP + CoA = a very long-chain fatty acyl-CoA + AMP + diphosphate. The enzyme catalyses tetracosanoate + ATP + CoA = tetracosanoyl-CoA + AMP + diphosphate. Its activity is regulated as follows. Inhibited by Triacsin C. In terms of biological role, mediates the import of long-chain fatty acids (LCFA) into the cell by facilitating their transport at the plasma membrane. Also functions as an acyl-CoA ligase catalyzing the ATP-dependent formation of fatty acyl-CoA using LCFA and very-long-chain fatty acids (VLCFA) as substrates, which prevents fatty acid efflux from cells and might drive more fatty acid uptake. May act directly as a bona fide transporter, or alternatively, in a cytoplasmic or membrane-associated multimeric protein complex to trap and draw fatty acids towards accumulation. Plays a pivotal role in regulating available LCFA substrates from exogenous sources in tissues undergoing high levels of beta-oxidation or triglyceride synthesis. May be involved in regulation of cholesterol metabolism. Probably involved in fatty acid transport across the blood barrier. In Bos taurus (Bovine), this protein is Long-chain fatty acid transport protein 1.